The chain runs to 296 residues: Glycine--tRNA ligase alpha subunit (296 aa).

The protein belongs to the class-II aminoacyl-tRNA synthetase family. In terms of assembly, tetramer of two alpha and two beta subunits.

The protein resides in the cytoplasm. It carries out the reaction tRNA(Gly) + glycine + ATP = glycyl-tRNA(Gly) + AMP + diphosphate. This chain is Glycine--tRNA ligase alpha subunit, found in Maricaulis maris (strain MCS10) (Caulobacter maris).